Consider the following 316-residue polypeptide: MLP-like protein 34 (316 aa).

It belongs to the MLP family.

The sequence is that of MLP-like protein 34 (MLP34) from Arabidopsis thaliana (Mouse-ear cress).